Here is a 540-residue protein sequence, read N- to C-terminus: Glucose-6-phosphate isomerase (540 aa).

The active-site Proton donor is Glu-351. Residues His-382 and Lys-506 contribute to the active site.

The protein belongs to the GPI family.

The protein localises to the cytoplasm. The catalysed reaction is alpha-D-glucose 6-phosphate = beta-D-fructose 6-phosphate. The protein operates within carbohydrate biosynthesis; gluconeogenesis. It functions in the pathway carbohydrate degradation; glycolysis; D-glyceraldehyde 3-phosphate and glycerone phosphate from D-glucose: step 2/4. Its function is as follows. Catalyzes the reversible isomerization of glucose-6-phosphate to fructose-6-phosphate. This chain is Glucose-6-phosphate isomerase, found in Corynebacterium glutamicum (strain ATCC 13032 / DSM 20300 / JCM 1318 / BCRC 11384 / CCUG 27702 / LMG 3730 / NBRC 12168 / NCIMB 10025 / NRRL B-2784 / 534).